Reading from the N-terminus, the 229-residue chain is Synaptogyrin-3 (229 aa).

Met-1 carries the post-translational modification N-acetylmethionine. The MARVEL domain maps to Phe-20–Arg-172. 4 consecutive transmembrane segments (helical) span residues Val-30–Asn-50, Phe-70–Val-90, Val-105–Phe-125, and Ala-148–Leu-168.

Belongs to the synaptogyrin family. Interacts (via N-terminus) with SLC6A3 (via N-terminus). May interact with VMAT2.

The protein localises to the cytoplasmic vesicle. It localises to the secretory vesicle. The protein resides in the synaptic vesicle membrane. Its subcellular location is the synapse. Functionally, may play a role in regulated exocytosis. May indirectly regulate the activity of the plasma membrane dopamine transporter SLC6A3 and thereby regulate dopamine transport back from the synaptic cleft into the presynaptic terminal. The polypeptide is Synaptogyrin-3 (Bos taurus (Bovine)).